The sequence spans 713 residues: Cadherin-13 (713 aa).

The first 22 residues, 1–22 (MQPATPLVLCVLLSQVLLLTSA), serve as a signal peptide directing secretion. A propeptide spanning residues 23–138 (EDLDCTPGFQ…RTSPVPRQKR (116 aa)) is cleaved from the precursor. 2 N-linked (GlcNAc...) asparagine glycosylation sites follow: Asn-52 and Asn-86. 5 Cadherin domains span residues 139–245 (SIVV…RPIF), 246–363 (REGP…SPKF), 364–477 (TKKE…SPVF), 478–585 (YPDP…APFI), and 584–694 (FIYP…AAGA). The disordered stretch occupies residues 156-178 (PRDVGKVVDSDRPEGSKFRLTGK). The segment covering 158-172 (DVGKVVDSDRPEGSK) has biased composition (basic and acidic residues). 7 N-linked (GlcNAc...) asparagine glycosylation sites follow: Asn-382, Asn-489, Asn-500, Asn-530, Asn-598, Asn-638, and Asn-671. Residue Gly-693 is the site of GPI-anchor amidated glycine attachment. The propeptide at 694–713 (APHFSAATALLLSLFSLARL) is removed in mature form.

By contrast to classical cadherins, homodimerization in trans is not mediated by cadherin EC1 domain strand-swapping, but instead through a homophilic adhesive interface which joins two elongated EC1-EC2 domains through a region near their Ca2+-binding sites to form a tetrahedral, X-like shape.

It is found in the cell membrane. Its subcellular location is the cytoplasm. Its function is as follows. Cadherins are calcium-dependent cell adhesion proteins. They preferentially interact with themselves in a homophilic manner in connecting cells; cadherins may thus contribute to the sorting of heterogeneous cell types. May act as a negative regulator of neural cell growth. The chain is Cadherin-13 (CDH13) from Bos taurus (Bovine).